Consider the following 464-residue polypeptide: UDP-N-acetylmuramoyl-tripeptide--D-alanyl-D-alanine ligase (464 aa).

125 to 131 (GSNGKTT) contacts ATP.

This sequence belongs to the MurCDEF family. MurF subfamily.

It is found in the cytoplasm. The enzyme catalyses D-alanyl-D-alanine + UDP-N-acetyl-alpha-D-muramoyl-L-alanyl-gamma-D-glutamyl-meso-2,6-diaminopimelate + ATP = UDP-N-acetyl-alpha-D-muramoyl-L-alanyl-gamma-D-glutamyl-meso-2,6-diaminopimeloyl-D-alanyl-D-alanine + ADP + phosphate + H(+). The protein operates within cell wall biogenesis; peptidoglycan biosynthesis. In terms of biological role, involved in cell wall formation. Catalyzes the final step in the synthesis of UDP-N-acetylmuramoyl-pentapeptide, the precursor of murein. The polypeptide is UDP-N-acetylmuramoyl-tripeptide--D-alanyl-D-alanine ligase (Borreliella burgdorferi (strain ATCC 35210 / DSM 4680 / CIP 102532 / B31) (Borrelia burgdorferi)).